A 302-amino-acid chain; its full sequence is UPF0761 membrane protein Tola_0461 (302 aa).

The next 6 helical transmembrane spans lie at 51–71 (YVSL…LSWL), 111–131 (TTSI…AAID), 150–170 (ITMY…SLLL), 188–208 (LGGG…ILLL), 222–242 (ALLG…GFGY), and 256–276 (ALAG…VVLL).

This sequence belongs to the UPF0761 family.

Its subcellular location is the cell inner membrane. This chain is UPF0761 membrane protein Tola_0461, found in Tolumonas auensis (strain DSM 9187 / NBRC 110442 / TA 4).